The chain runs to 83 residues: Small ribosomal subunit protein uS17 (83 aa).

It belongs to the universal ribosomal protein uS17 family. In terms of assembly, part of the 30S ribosomal subunit.

One of the primary rRNA binding proteins, it binds specifically to the 5'-end of 16S ribosomal RNA. In Synechococcus sp. (strain RCC307), this protein is Small ribosomal subunit protein uS17.